We begin with the raw amino-acid sequence, 318 residues long: NADH-ubiquinone oxidoreductase chain 1 (318 aa).

The next 8 membrane-spanning stretches (helical) occupy residues 3-23, 68-88, 102-122, 146-166, 171-191, 222-242, 253-273, and 294-314; these read FVNL…LTLL, LILF…MWIP, ILFM…SGWA, LAII…STLI, HIWL…STLA, LFFL…TILF, EMYT…FLWI, and LPLT…LASI.

This sequence belongs to the complex I subunit 1 family.

It is found in the mitochondrion inner membrane. It carries out the reaction a ubiquinone + NADH + 5 H(+)(in) = a ubiquinol + NAD(+) + 4 H(+)(out). Functionally, core subunit of the mitochondrial membrane respiratory chain NADH dehydrogenase (Complex I) that is believed to belong to the minimal assembly required for catalysis. Complex I functions in the transfer of electrons from NADH to the respiratory chain. The immediate electron acceptor for the enzyme is believed to be ubiquinone. This chain is NADH-ubiquinone oxidoreductase chain 1 (MT-ND1), found in Nyctalus plancyi velutinus (Fine-haired noctule).